A 556-amino-acid chain; its full sequence is Arginine--tRNA ligase (556 aa).

Positions 129–139 match the 'HIGH' region motif; that stretch reads ANPTGPLHVGH.

The protein belongs to the class-I aminoacyl-tRNA synthetase family. As to quaternary structure, monomer.

It is found in the cytoplasm. It catalyses the reaction tRNA(Arg) + L-arginine + ATP = L-arginyl-tRNA(Arg) + AMP + diphosphate. This Desulfosudis oleivorans (strain DSM 6200 / JCM 39069 / Hxd3) (Desulfococcus oleovorans) protein is Arginine--tRNA ligase.